The sequence spans 447 residues: MREIVHLQTGQCGNQIGAAFWQTIAGEHGLDGSGHYTGSSDLQLERMNVYFNEASSKKYVPRAVLVDLEPAALDAVRAGPFGQLFRPDNVVFGQSGAGNNWAKGHYTEGANLVDQVIDVVRREAEGCDCLQGFQITHSLGGGTGAGMGTLLISKIREEFPAGMMATFSVVPSPMVSDTVVEPYNATLSIHQLVEHSDETFCIDNEALYNICMRTLKLTNPSYGDLNHLVSAVMSGVSTSLRFPGQLNSDLRKLAVNMVPFPRLHFFMVGFAPLTSRNAYSFRAVSVPELTQQMFDPKNMMAATDFRSGRYLTCSAIFRGKVSMKEVEDQMRNIQNKNSAYFVEWIPNNVQTALCSIPPRGLQMSSTFVGNSTSIQELFKRVGDQFTAMFRKKAFLFWYTGEGMDEMEFTEAENNMNDLVSEYQQYQDASVSDGEEEYLEDEQLEGEE.

8 residues coordinate GTP: Gln11, Glu69, Ser138, Gly142, Thr143, Gly144, Asn204, and Asn226. Glu69 serves as a coordination point for Mg(2+).

It belongs to the tubulin family. As to quaternary structure, dimer of alpha and beta chains. A typical microtubule is a hollow water-filled tube with an outer diameter of 25 nm and an inner diameter of 15 nM. Alpha-beta heterodimers associate head-to-tail to form protofilaments running lengthwise along the microtubule wall with the beta-tubulin subunit facing the microtubule plus end conferring a structural polarity. Microtubules usually have 13 protofilaments but different protofilament numbers can be found in some organisms and specialized cells. Mg(2+) is required as a cofactor.

The protein resides in the cytoplasm. It localises to the cytoskeleton. Functionally, tubulin is the major constituent of microtubules, a cylinder consisting of laterally associated linear protofilaments composed of alpha- and beta-tubulin heterodimers. Microtubules grow by the addition of GTP-tubulin dimers to the microtubule end, where a stabilizing cap forms. Below the cap, tubulin dimers are in GDP-bound state, owing to GTPase activity of alpha-tubulin. This Trichophyton rubrum (Athlete's foot fungus) protein is Tubulin beta chain.